Here is an 837-residue protein sequence, read N- to C-terminus: Tuftelin-interacting protein 11 (837 aa).

Composition is skewed to basic and acidic residues over residues 1–13 (MSLS…GEGR) and 53–64 (VWAERDSDDERP). 3 disordered regions span residues 1 to 21 (MSLS…DDER), 53 to 72 (VWAE…KRAR), and 85 to 133 (LKKG…KGFA). The tract at residues 1–50 (MSLSHLYRDGEGRIDDDDDERENFEITDWDLQNEFNPNRQRHWQTKEEAT) is required for interaction with DHX15. Phosphoserine is present on residues Ser-2, Ser-59, and Ser-98. A compositionally biased stretch (acidic residues) spans 91–102 (EEAELEDSDDEE). The segment covering 103–116 (KPVKQDDFPKDFGP) has biased composition (basic and acidic residues). Ser-144 carries the phosphoserine modification. In terms of domain architecture, G-patch spans 149 to 195 (TKGIGQKLLQKMGYVPGRGLGKNAQGIINPIEAKQRKGKGAVGAYGS). A disordered region spans residues 179 to 236 (IEAKQRKGKGAVGAYGSERTTQSMQDFPVVDSEEEAEEEFQKELSQWRKDPSGSKKKP). Phosphoserine is present on Ser-210. Residues 217–231 (EFQKELSQWRKDPSG) are compositionally biased toward basic and acidic residues. A Nuclear localization signal motif is present at residues 700–705 (VKDKFN). The required for nuclear speckle localization stretch occupies residues 710 to 734 (IMNRAVSSNVGAYMQPGARENIAYL).

The protein belongs to the TFP11/STIP family. Identified in the spliceosome C complex. Found in the Intron Large (IL) complex, a post-mRNA release spliceosomal complex containing the excised intron, U2, U5 and U6 snRNPs, and splicing factors. Interacts with TUFT1. Interacts with DHX15; indicative for a recruitment of DHX15 to the IL complex. Interacts with GCFC2.

It localises to the cytoplasm. It is found in the nucleus. Its function is as follows. Involved in pre-mRNA splicing, specifically in spliceosome disassembly during late-stage splicing events. Intron turnover seems to proceed through reactions in two lariat-intron associated complexes termed Intron Large (IL) and Intron Small (IS). In cooperation with DHX15 seems to mediate the transition of the U2, U5 and U6 snRNP-containing IL complex to the snRNP-free IS complex leading to efficient debranching and turnover of excised introns. May play a role in the differentiation of ameloblasts and odontoblasts or in the forming of the enamel extracellular matrix. In Homo sapiens (Human), this protein is Tuftelin-interacting protein 11 (TFIP11).